The following is a 388-amino-acid chain: Large ribosomal subunit protein uL3A (388 aa).

Basic and acidic residues predominate over residues 1–10; sequence MSHCKFEQPR. Positions 1-34 are disordered; sequence MSHCKFEQPRHGSLGFLPRKRASRQRGKVKAFPK. Serine 13 bears the Phosphoserine mark. Over residues 18–31 the composition is skewed to basic residues; the sequence is PRKRASRQRGKVKA. 6 positions are modified to phosphoserine: serine 65, serine 140, serine 143, serine 207, serine 295, and serine 355. Threonine 372 is subject to Phosphothreonine.

The protein belongs to the universal ribosomal protein uL3 family. Component of the large ribosomal subunit (LSU). Mature yeast ribosomes consist of a small (40S) and a large (60S) subunit. The 40S small subunit contains 1 molecule of ribosomal RNA (18S rRNA) and at least 33 different proteins. The large 60S subunit contains 3 rRNA molecules (25S, 5.8S and 5S rRNA) and at least 46 different proteins. uL3 forms together with ES39L one of the contact sites for the signal recognition particle that targets ribosomes to the endoplasmic reticulum membrane.

It localises to the cytoplasm. Component of the ribosome, a large ribonucleoprotein complex responsible for the synthesis of proteins in the cell. The small ribosomal subunit (SSU) binds messenger RNAs (mRNAs) and translates the encoded message by selecting cognate aminoacyl-transfer RNA (tRNA) molecules. The large subunit (LSU) contains the ribosomal catalytic site termed the peptidyl transferase center (PTC), which catalyzes the formation of peptide bonds, thereby polymerizing the amino acids delivered by tRNAs into a polypeptide chain. The nascent polypeptides leave the ribosome through a tunnel in the LSU and interact with protein factors that function in enzymatic processing, targeting, and the membrane insertion of nascent chains at the exit of the ribosomal tunnel. uL3 plays a role in coordinating processes of accommodating the aminoacyl-tRNA in the PTC. This is Large ribosomal subunit protein uL3A (rpl301) from Schizosaccharomyces pombe (strain 972 / ATCC 24843) (Fission yeast).